The sequence spans 78 residues: Large ribosomal subunit protein bL28 (78 aa).

This sequence belongs to the bacterial ribosomal protein bL28 family.

This chain is Large ribosomal subunit protein bL28, found in Trichormus variabilis (strain ATCC 29413 / PCC 7937) (Anabaena variabilis).